A 327-amino-acid polypeptide reads, in one-letter code: Zinc finger C2HC domain-containing protein 1A (327 aa).

The C2HC/C3H-type 1 zinc finger occupies 13-42; the sequence is ELVPCKICGRSFFPKVLKKHVPICQKTAAK. Residues cysteine 17, cysteine 20, histidine 32, and cysteine 36 each contribute to the Zn(2+) site. 2 disordered regions span residues 40–96 and 108–131; these read AAKR…KHEE and NQVI…DYIQ. Residues 46–56 show a composition bias toward basic and acidic residues; that stretch reads VFDSGRQRAEG. The segment covering 63–76 has biased composition (low complexity); the sequence is KPIKPKLQSSSSSS. The segment covering 116–125 has biased composition (pro residues); it reads PLPPPPPPSY. The C2HC/C3H-type 2 zinc-finger motif lies at 128-157; sequence DYIQCPYCQRRFGENAADRHIKFCKEQASR. Zn(2+) is bound by residues cysteine 132, cysteine 135, histidine 147, and cysteine 151. The segment at 154–271 is disordered; it reads QASRISNKSK…NPSTGIGMNK (118 aa). Positions 187-199 are enriched in polar residues; it reads NSPTASSVSSRLP. Residues 211 to 229 show a composition bias toward low complexity; that stretch reads GIPSSKPSSTGSIKSTPSG. Polar residues-rich tracts occupy residues 233–245 and 255–267; these read LRNN…SPPS and VSQS…STGI.

This sequence belongs to the ZC2HC1 family. Zn(2+) serves as cofactor.

In Danio rerio (Zebrafish), this protein is Zinc finger C2HC domain-containing protein 1A (zc2hc1a).